The sequence spans 589 residues: Mitogen-activated protein kinase 8 (589 aa).

Residues 18–56 (RPSSSSSSSSSNNNNNNHEQPIFNSSSFSSSSNPNHSAN) form a disordered region. Low complexity-rich tracts occupy residues 20 to 34 (SSSS…NNNN) and 41 to 56 (NSSS…HSAN). The region spanning 104–395 (YQIQEVVGKG…AEDALADPYF (292 aa)) is the Protein kinase domain. ATP-binding positions include 110–118 (VGKGSYGVV) and Lys-133. Catalysis depends on Asp-230, which acts as the Proton acceptor. At Thr-266 the chain carries Phosphothreonine. Residues 266–268 (TDY) carry the TXY motif. Position 268 is a phosphotyrosine (Tyr-268). Thr-271 is subject to Phosphothreonine. A disordered region spans residues 474 to 589 (NQGKPGAAGG…TDKVASLHNS (116 aa)).

This sequence belongs to the protein kinase superfamily. CMGC Ser/Thr protein kinase family. MAP kinase subfamily. As to quaternary structure, interacts with CAM3, CAM4 and CAM7 in an calcium-dependent manner. Post-translationally, dually phosphorylated on Thr-266 and Tyr-268, which activates the enzyme. Autophosphorylated. As to expression, ubiquitous.

The catalysed reaction is L-seryl-[protein] + ATP = O-phospho-L-seryl-[protein] + ADP + H(+). It carries out the reaction L-threonyl-[protein] + ATP = O-phospho-L-threonyl-[protein] + ADP + H(+). With respect to regulation, activated by threonine and tyrosine phosphorylation. Activated by two independent mechanisms, the binding of CAMs in a calcium-dependent manner and the phosphorylation by MAP kinase kinase MKK3. Activated in response to mechanical wounding, hydrogen peroxide and jasmonic acid (JA). In terms of biological role, MKK3-MPK8 and CAMs-MPK8 modules negatively regulates ROS accumulation through controlling expression of the RBOHD gene during wounding. This chain is Mitogen-activated protein kinase 8 (MPK8), found in Arabidopsis thaliana (Mouse-ear cress).